Reading from the N-terminus, the 62-residue chain is Probable tautomerase SH1546 (62 aa).

The active-site Proton acceptor; via imino nitrogen is the P2.

This sequence belongs to the 4-oxalocrotonate tautomerase family.

The sequence is that of Probable tautomerase SH1546 from Staphylococcus haemolyticus (strain JCSC1435).